Here is a 117-residue protein sequence, read N- to C-terminus: DNA-directed RNA polymerase subunit omega (117 aa).

It belongs to the RNA polymerase subunit omega family. The RNAP catalytic core consists of 2 alpha, 1 beta, 1 beta' and 1 omega subunit. When a sigma factor is associated with the core the holoenzyme is formed, which can initiate transcription.

It catalyses the reaction RNA(n) + a ribonucleoside 5'-triphosphate = RNA(n+1) + diphosphate. In terms of biological role, promotes RNA polymerase assembly. Latches the N- and C-terminal regions of the beta' subunit thereby facilitating its interaction with the beta and alpha subunits. The protein is DNA-directed RNA polymerase subunit omega of Ruegeria sp. (strain TM1040) (Silicibacter sp.).